The following is a 357-amino-acid chain: Peptide chain release factor 1 (357 aa).

An N5-methylglutamine modification is found at Gln234. The tract at residues 283 to 313 (SKKQEQRSSNRKQQVGSGDRSERIRTYNFPQ) is disordered.

The protein belongs to the prokaryotic/mitochondrial release factor family. Post-translationally, methylated by PrmC. Methylation increases the termination efficiency of RF1.

The protein localises to the cytoplasm. Its function is as follows. Peptide chain release factor 1 directs the termination of translation in response to the peptide chain termination codons UAG and UAA. This is Peptide chain release factor 1 (prfA) from Borreliella burgdorferi (strain ATCC 35210 / DSM 4680 / CIP 102532 / B31) (Borrelia burgdorferi).